The sequence spans 450 residues: Hyaluronidase-1 (450 aa).

A signal peptide spans 1 to 35; the sequence is MRPFSLEVSLHLPWAMAAHLLPVCTLFLNLLSMTQ. Cystine bridges form between Cys58–Cys348 and Cys222–Cys236. Asn85 carries N-linked (GlcNAc...) asparagine glycosylation. Glu146 serves as the catalytic Proton donor. 2 N-linked (GlcNAc...) asparagine glycosylation sites follow: Asn231 and Asn365. 3 disulfides stabilise this stretch: Cys373–Cys384, Cys378–Cys433, and Cys435–Cys444. A glycan (N-linked (GlcNAc...) asparagine) is linked at Asn398. The EGF-like domain maps to 433-444; the sequence is CRCYRGWRGTRC.

This sequence belongs to the glycosyl hydrolase 56 family.

It is found in the secreted. The protein resides in the lysosome. The catalysed reaction is Random hydrolysis of (1-&gt;4)-linkages between N-acetyl-beta-D-glucosamine and D-glucuronate residues in hyaluronate.. Functionally, may have a role in promoting tumor progression. May block the TGFB1-enhanced cell growth. This Bos taurus (Bovine) protein is Hyaluronidase-1 (HYAL1).